We begin with the raw amino-acid sequence, 317 residues long: Methionyl-tRNA formyltransferase (317 aa).

A (6S)-5,6,7,8-tetrahydrofolate-binding site is contributed by 112 to 115; it reads SLLP.

Belongs to the Fmt family.

It catalyses the reaction L-methionyl-tRNA(fMet) + (6R)-10-formyltetrahydrofolate = N-formyl-L-methionyl-tRNA(fMet) + (6S)-5,6,7,8-tetrahydrofolate + H(+). Attaches a formyl group to the free amino group of methionyl-tRNA(fMet). The formyl group appears to play a dual role in the initiator identity of N-formylmethionyl-tRNA by promoting its recognition by IF2 and preventing the misappropriation of this tRNA by the elongation apparatus. This chain is Methionyl-tRNA formyltransferase, found in Mycoplasma mycoides subsp. mycoides SC (strain CCUG 32753 / NCTC 10114 / PG1).